The primary structure comprises 289 residues: Rhodopsin (289 aa).

The Extracellular portion of the chain corresponds to 1-7 (YLVNPAA). The helical transmembrane segment at 8–32 (YAALGAYMFLLILIGFPVNFLTLYV) threads the bilayer. Residues 33-44 (TLEHKKLRTPLN) are Cytoplasmic-facing. Residues 45 to 67 (YILLNLAVADLFMVLGGFTTTMY) traverse the membrane as a helical segment. Over 68-81 (TSMHGYFVLGRLGC) the chain is Extracellular. A disulfide bridge links cysteine 81 with cysteine 158. Residues 82-104 (NLEGFFATLGGEIALWSLVVLAI) form a helical membrane-spanning segment. The short motif at 105–107 (ERW) is the 'Ionic lock' involved in activated form stabilization element. Residues 105–123 (ERWIVVCKPISNFRFTEDH) lie on the Cytoplasmic side of the membrane. A helical transmembrane segment spans residues 124–144 (AIMGLAFSWVMALSCSVPPLV). The Extracellular segment spans residues 145-173 (GWSRYIPEAMQCSCGVDYYTRAEGFNTES). Residues 174-195 (FVLYMFTVHFLIPLSVIFFCYG) form a helical membrane-spanning segment. Residues 196-223 (RLLCAVKEAAAAQQESETTQRSEKEVSR) are Cytoplasmic-facing. Residues 224–245 (MVVLMVIGFLVCWLPYASTAWW) form a helical membrane-spanning segment. Residues 246–257 (IFCNQGSEFGPV) lie on the Extracellular side of the membrane. The helical transmembrane segment at 258 to 279 (FMTIPAFFAKSSAIYNPMIYIC) threads the bilayer. Lysine 267 is modified (N6-(retinylidene)lysine). Residues 280–289 (MNKQFRHCMI) are Cytoplasmic-facing.

This sequence belongs to the G-protein coupled receptor 1 family. Opsin subfamily. In terms of processing, phosphorylated on some or all of the serine and threonine residues present in the C-terminal region. Post-translationally, contains one covalently linked retinal chromophore.

The protein resides in the membrane. It is found in the cell projection. Its subcellular location is the cilium. The protein localises to the photoreceptor outer segment. In terms of biological role, photoreceptor required for image-forming vision at low light intensity. While most salt water fish species use retinal as chromophore, most freshwater fish use 3-dehydroretinal, or a mixture of retinal and 3-dehydroretinal. Light-induced isomerization of 11-cis to all-trans retinal triggers a conformational change that activates signaling via G-proteins. Subsequent receptor phosphorylation mediates displacement of the bound G-protein alpha subunit by arrestin and terminates signaling. The polypeptide is Rhodopsin (rho) (Comephorus dybowskii).